A 76-amino-acid chain; its full sequence is Probable insulin-like peptide alpha-type 1 (76 aa).

The N-terminal stretch at 1–24 (MKTYSFFVLFIVFIFFISSSKSHS) is a signal peptide. 3 disulfide bridges follow: C32–C60, C44–C73, and C48–C74.

This sequence belongs to the insulin family.

The protein resides in the secreted. This chain is Probable insulin-like peptide alpha-type 1 (ins-21), found in Caenorhabditis elegans.